A 391-amino-acid polypeptide reads, in one-letter code: UPF0229 protein BAA_0633 (391 aa).

The segment covering 1–16 (MGEENQPNYTISQENW) has biased composition (polar residues). Disordered regions lie at residues 1–31 (MGEE…RHQE) and 80–117 (HVGQ…GDAA). A compositionally biased stretch (basic and acidic residues) spans 21 to 31 (KGYDDQQRHQE). The segment covering 98 to 115 (GSGGQKQKGPGKGQGAGD) has biased composition (gly residues).

The protein belongs to the UPF0229 family.

In Bacillus anthracis (strain A0248), this protein is UPF0229 protein BAA_0633.